Reading from the N-terminus, the 257-residue chain is Diphthine synthase (257 aa).

S-adenosyl-L-methionine-binding positions include L9, D83, M86, 111–112 (SI), and I163.

This sequence belongs to the diphthine synthase family. As to quaternary structure, homodimer.

The enzyme catalyses 2-[(3S)-amino-3-carboxypropyl]-L-histidyl-[translation elongation factor 2] + 3 S-adenosyl-L-methionine = diphthine-[translation elongation factor 2] + 3 S-adenosyl-L-homocysteine + 3 H(+). The protein operates within protein modification; peptidyl-diphthamide biosynthesis. Its function is as follows. S-adenosyl-L-methionine-dependent methyltransferase that catalyzes the trimethylation of the amino group of the modified target histidine residue in translation elongation factor 2 (EF-2), to form an intermediate called diphthine. The three successive methylation reactions represent the second step of diphthamide biosynthesis. The chain is Diphthine synthase from Thermoplasma acidophilum (strain ATCC 25905 / DSM 1728 / JCM 9062 / NBRC 15155 / AMRC-C165).